The following is a 292-amino-acid chain: S-adenosyl-L-methionine-dependent Diels-Alderase iccD (292 aa).

A helical transmembrane segment spans residues 240–262 (LPVVRMFYVVLLVPYLFVRLLGI).

This sequence belongs to the class I-like SAM-binding methyltransferase superfamily. Erg6/SMT family. S-adenosyl-L-methionine is required as a cofactor.

The protein resides in the membrane. It carries out the reaction 3-[(2E,4E,8S,10E,12Z)-4,8-dimethyltetradeca-2,4,10,12-tetraenoyl]-4-hydroxy-5-(4-hydroxyphenyl)-1,2-dihydropyridin-2-one = 8-epi-ilicicolin H. Its pathway is mycotoxin biosynthesis. Functionally, S-adenosyl-l-methionine-dependent Diels-Alderase; part of the gene cluster that mediates the biosynthesis of ilicicolin H, a 4-hydroxy-2-pyridonealkaloid that has potent and broad antifungal activities by inhibiting the mitochondrial respiration chain. IccD catalyzes the Diels-Alder reaction that converts the acyclic 2-pyridone intermediate to 8-epi-ilicicolin H. The biosynthesis of ilicicolin H starts with formation of the tetramic acid by the hybrid PKS-NRPS synthetase iccA with the partnering trans-enoyl reductase iccB since iccA lacks a designated enoylreductase (ER) domain. The cytochrome P450 monooxygenase iccC then catalyzes the ring expansion of the tetramate to the acyclic 2-pyridone. The pericyclase iccD further converts the acyclic 2-pyridone into 8-epi-ilicicolin H. Finally, the epimerase iccE converts 8-epi-ilicicolin H into ilicicolin H via epimerization. IccA to iccE are sufficient for ilicicolin H biosynthesis and the roles of the remaining enzymes, iccF, iccG and iccH within the pathway have still to be determined. This Talaromyces variabilis (Penicillium variabile) protein is S-adenosyl-L-methionine-dependent Diels-Alderase iccD.